Consider the following 385-residue polypeptide: Probable thioesterase PNKD (385 aa).

Residues 32–42 are compositionally biased toward polar residues; it reads KASQNRTRALQ. A disordered region spans residues 32 to 56; the sequence is KASQNRTRALQSHSSPECKEEPEPL. At Val121 the chain carries Phosphoserine. Zn(2+)-binding residues include His172, His174, Asp176, His177, His229, Asp253, and His291.

It belongs to the metallo-beta-lactamase superfamily. Glyoxalase II family. Isoform 2 interacts with the sarcomeric proteins, MRLC2, MYOM1 and ENO3. Zn(2+) serves as cofactor. In terms of processing, undergoes cleavage at the N-terminus. Expressed in many discrete areas of the brain.

The protein localises to the cell membrane. It localises to the mitochondrion. It is found in the cytoplasm. It carries out the reaction a thioester + H2O = a thiol + a carboxylate + H(+). Probable thioesterase that may play a role in cellular detoxification processes; it likely acts on a yet-unknown alpha-hydroxythioester substrate. In vitro, it is able to catalyze the hydrolysis of S-D-lactoyl-glutathione to form glutathione and D-lactic acid at very low rate, though this reaction is not physiologically relevant in vivo. In Mus musculus (Mouse), this protein is Probable thioesterase PNKD (Pnkd).